The following is a 312-amino-acid chain: 4-diphosphocytidyl-2-C-methyl-D-erythritol kinase (312 aa).

The active site involves Lys18. 104–114 contributes to the ATP binding site; the sequence is PIAGGMGGGSA. Asp146 is an active-site residue.

Belongs to the GHMP kinase family. IspE subfamily.

The catalysed reaction is 4-CDP-2-C-methyl-D-erythritol + ATP = 4-CDP-2-C-methyl-D-erythritol 2-phosphate + ADP + H(+). It functions in the pathway isoprenoid biosynthesis; isopentenyl diphosphate biosynthesis via DXP pathway; isopentenyl diphosphate from 1-deoxy-D-xylulose 5-phosphate: step 3/6. Catalyzes the phosphorylation of the position 2 hydroxy group of 4-diphosphocytidyl-2C-methyl-D-erythritol. This is 4-diphosphocytidyl-2-C-methyl-D-erythritol kinase from Clavibacter michiganensis subsp. michiganensis (strain NCPPB 382).